Here is a 64-residue protein sequence, read N- to C-terminus: Large ribosomal subunit protein bL28 (64 aa).

This sequence belongs to the bacterial ribosomal protein bL28 family.

The chain is Large ribosomal subunit protein bL28 from Campylobacter jejuni subsp. jejuni serotype O:6 (strain 81116 / NCTC 11828).